We begin with the raw amino-acid sequence, 156 residues long: MKCRLIATGECAPSWVAQGFAEYQKRLSHWMPLELVEIEPGLRGKGRDAQRATDDEGRRVLAALPKNAYVVALDVPGRPLSSEQLAQRMEHWRGQGRDLAFLIGGPEGHAAEVLKSASESWSIGPLTLPHMLVRLIVAEQLYRAAAMLANHPYHRA.

S-adenosyl-L-methionine contacts are provided by residues Leu-73, Gly-104, and 123 to 128; that span reads IGPLTL.

Belongs to the RNA methyltransferase RlmH family. Homodimer.

It is found in the cytoplasm. It carries out the reaction pseudouridine(1915) in 23S rRNA + S-adenosyl-L-methionine = N(3)-methylpseudouridine(1915) in 23S rRNA + S-adenosyl-L-homocysteine + H(+). Its function is as follows. Specifically methylates the pseudouridine at position 1915 (m3Psi1915) in 23S rRNA. In Xanthomonas euvesicatoria pv. vesicatoria (strain 85-10) (Xanthomonas campestris pv. vesicatoria), this protein is Ribosomal RNA large subunit methyltransferase H.